A 141-amino-acid polypeptide reads, in one-letter code: Large ribosomal subunit protein uL11 (141 aa).

This sequence belongs to the universal ribosomal protein uL11 family. Part of the ribosomal stalk of the 50S ribosomal subunit. Interacts with L10 and the large rRNA to form the base of the stalk. L10 forms an elongated spine to which L12 dimers bind in a sequential fashion forming a multimeric L10(L12)X complex. One or more lysine residues are methylated.

Its function is as follows. Forms part of the ribosomal stalk which helps the ribosome interact with GTP-bound translation factors. The chain is Large ribosomal subunit protein uL11 from Exiguobacterium sp. (strain ATCC BAA-1283 / AT1b).